Reading from the N-terminus, the 176-residue chain is Tubulin polymerization-promoting protein family member 3 (176 aa).

At A2 the chain carries N-acetylalanine.

The protein belongs to the TPPP family.

Its subcellular location is the cytoplasm. The protein localises to the cytoskeleton. In terms of biological role, regulator of microtubule dynamic that has microtubule bundling activity. Required for embryo implantation; possibly by regulating beta-catenin. Also required for decidualization via regulation of beta-catenin. This Rattus norvegicus (Rat) protein is Tubulin polymerization-promoting protein family member 3 (Tppp3).